A 225-amino-acid polypeptide reads, in one-letter code: Urease accessory protein UreF (225 aa).

The protein belongs to the UreF family. In terms of assembly, ureD, UreF and UreG form a complex that acts as a GTP-hydrolysis-dependent molecular chaperone, activating the urease apoprotein by helping to assemble the nickel containing metallocenter of UreC. The UreE protein probably delivers the nickel.

It is found in the cytoplasm. In terms of biological role, required for maturation of urease via the functional incorporation of the urease nickel metallocenter. In Geobacillus kaustophilus (strain HTA426), this protein is Urease accessory protein UreF.